The chain runs to 399 residues: Probable peptidoglycan glycosyltransferase FtsW (399 aa).

The next 9 membrane-spanning stretches (helical) occupy residues 19 to 39 (PLPV…VMIS), 61 to 81 (ILFA…PVSW), 85 to 105 (SGWL…TPLG), 114 to 134 (WIPM…CLIA), 160 to 180 (VLGV…TVVL), 198 to 218 (FMPL…TQPY), 285 to 305 (LLGA…GLVI), 314 to 334 (MAFG…QAGI), and 350 to 370 (LPLV…IAVI).

This sequence belongs to the SEDS family. FtsW subfamily.

The protein localises to the cell inner membrane. It catalyses the reaction [GlcNAc-(1-&gt;4)-Mur2Ac(oyl-L-Ala-gamma-D-Glu-L-Lys-D-Ala-D-Ala)](n)-di-trans,octa-cis-undecaprenyl diphosphate + beta-D-GlcNAc-(1-&gt;4)-Mur2Ac(oyl-L-Ala-gamma-D-Glu-L-Lys-D-Ala-D-Ala)-di-trans,octa-cis-undecaprenyl diphosphate = [GlcNAc-(1-&gt;4)-Mur2Ac(oyl-L-Ala-gamma-D-Glu-L-Lys-D-Ala-D-Ala)](n+1)-di-trans,octa-cis-undecaprenyl diphosphate + di-trans,octa-cis-undecaprenyl diphosphate + H(+). It participates in cell wall biogenesis; peptidoglycan biosynthesis. Its function is as follows. Peptidoglycan polymerase that is essential for cell division. The polypeptide is Probable peptidoglycan glycosyltransferase FtsW (Marinobacter nauticus (strain ATCC 700491 / DSM 11845 / VT8) (Marinobacter aquaeolei)).